The sequence spans 597 residues: uncharacterized protein (597 aa).

2 helical membrane passes run 4–23 (LLLA…FKIV) and 209–231 (FVSV…GIAI).

Its subcellular location is the cell membrane. This is an uncharacterized protein from Archaeoglobus fulgidus (strain ATCC 49558 / DSM 4304 / JCM 9628 / NBRC 100126 / VC-16).